The primary structure comprises 697 residues: Serine/threonine-protein kinase tousled-like 2 (697 aa).

2 disordered regions span residues 27-136 and 289-315; these read KAPL…TAPV and LAKR…NKTN. Over residues 31–44 the composition is skewed to polar residues; the sequence is NSESSNQSLCSLGS. Positions 46–62 are enriched in basic and acidic residues; it reads SDKELEQTPEKKQNDQR. A compositionally biased stretch (low complexity) spans 111–131; it reads SSPQHSLSNPLPLPSQQCSPP. Coiled-coil stretches lie at residues 264–293 and 334–372; these read AFQN…AKRK and FKLR…IHNE. Positions 387-666 constitute a Protein kinase domain; the sequence is YLLLHLLGRG…VQQLACDPYL (280 aa). ATP-binding positions include 393–401 and Lys416; that span reads LGRGGFSEV. The active-site Proton acceptor is the Asp517.

This sequence belongs to the protein kinase superfamily. Ser/Thr protein kinase family. Monomer. May form homodimers; homodimerization may enhance autophosphoylation and enzymatic activity. Heterodimer with TLK1. Requires Mg(2+) as cofactor. Phosphorylated. Autophosphorylated; phosphorylation promotes the assembly of higher order oligomers and enzymatic activity.

It is found in the nucleus. The protein localises to the nucleoplasm. It localises to the cytoplasm. Its subcellular location is the perinuclear region. The protein resides in the cytoskeleton. The catalysed reaction is L-seryl-[protein] + ATP = O-phospho-L-seryl-[protein] + ADP + H(+). It carries out the reaction L-threonyl-[protein] + ATP = O-phospho-L-threonyl-[protein] + ADP + H(+). Functionally, serine/threonine-protein kinase involved in the process of chromatin assembly and probably also DNA replication, transcription, repair, and chromosome segregation. Negative regulator of amino acid starvation-induced autophagy. The protein is Serine/threonine-protein kinase tousled-like 2 of Xenopus tropicalis (Western clawed frog).